A 285-amino-acid polypeptide reads, in one-letter code: HTH-type transcriptional regulator MurR (285 aa).

One can recognise an HTH rpiR-type domain in the interval 1–77 (MLYLTKISNA…MALIGEYSAS (77 aa)). Residues 37-56 (SRQMAKQLGISQSSIVKFAQ) constitute a DNA-binding region (H-T-H motif). The SIS domain maps to 128–279 (IIEVISKAPF…SLKMIQRSSE (152 aa)).

As to quaternary structure, homotetramer.

It functions in the pathway amino-sugar metabolism; N-acetylmuramate degradation [regulation]. In terms of biological role, represses the expression of the murPQ operon involved in the uptake and degradation of N-acetylmuramic acid (MurNAc). Binds to two adjacent inverted repeats within the operator region. MurNAc 6-phosphate, the substrate of MurQ, is the specific inducer that weakens binding of MurR to the operator. This chain is HTH-type transcriptional regulator MurR, found in Shigella boydii serotype 4 (strain Sb227).